Consider the following 192-residue polypeptide: Fe/S biogenesis protein NfuA (192 aa).

[4Fe-4S] cluster is bound by residues C150 and C153.

This sequence belongs to the NfuA family. In terms of assembly, homodimer. [4Fe-4S] cluster is required as a cofactor.

Functionally, involved in iron-sulfur cluster biogenesis. Binds a 4Fe-4S cluster, can transfer this cluster to apoproteins, and thereby intervenes in the maturation of Fe/S proteins. Could also act as a scaffold/chaperone for damaged Fe/S proteins. In Buchnera aphidicola subsp. Acyrthosiphon pisum (strain APS) (Acyrthosiphon pisum symbiotic bacterium), this protein is Fe/S biogenesis protein NfuA.